Reading from the N-terminus, the 156-residue chain is Probable low-salt glycan biosynthesis epimerase Agl13 (156 aa).

Residues arginine 19, glutamate 24, 39–41, arginine 51, histidine 54, and histidine 109 each bind substrate; that span reads MSY.

This sequence belongs to the dTDP-4-dehydrorhamnose 3,5-epimerase family.

Its pathway is protein modification; protein glycosylation. It functions in the pathway cell surface structure biogenesis; S-layer biogenesis. In terms of biological role, epimerase involved in N-glycan biosynthetic pathway that takes place under low-salt conditions (1.75 M instead of 3.4 M). Participates in the formation of the tetrasaccharide present at 'Asn-532' of S-layer glycoprotein Csg, consisting of a sulfated hexose, 2 hexoses and rhamnose. Involved in the addition of final rhamnose (sugar 4) of the tetrasaccharide on the dolichol phosphate carrier. The sequence is that of Probable low-salt glycan biosynthesis epimerase Agl13 (agl13) from Haloferax volcanii (strain ATCC 29605 / DSM 3757 / JCM 8879 / NBRC 14742 / NCIMB 2012 / VKM B-1768 / DS2) (Halobacterium volcanii).